The sequence spans 1094 residues: Centrosomal protein of 128 kDa (1094 aa).

Positions Met1–Thr29 are disordered. The segment covering Glu7–Leu17 has biased composition (basic and acidic residues). Residue Ser31 is modified to Phosphoserine. The disordered stretch occupies residues Asp115–Ile140. 2 coiled-coil regions span residues Ser190–Ile827 and Glu879–Glu959. Phosphoserine is present on residues Ser249, Ser291, and Ser331. Positions Ala319–Gly345 are disordered. Residues His328 to Asp342 are compositionally biased toward polar residues. Over residues Asp987 to Tyr999 the composition is skewed to basic and acidic residues. Positions Asp987–Tyr1018 are disordered. A compositionally biased stretch (basic residues) spans Ser1000–Leu1009. A Phosphoserine modification is found at Ser1061. A disordered region spans residues Val1067 to Ser1094.

It is found in the cytoplasm. Its subcellular location is the cytoskeleton. The protein localises to the microtubule organizing center. It localises to the centrosome. The protein resides in the centriole. It is found in the spindle pole. The polypeptide is Centrosomal protein of 128 kDa (CEP128) (Homo sapiens (Human)).